The sequence spans 83 residues: MNPSPRGKKRVFHRRKYCRFCADSSLPIDYKNPKSLKSFITERGKIIPRRISGTCAKHQRAITREIKRARTIALLPYVGKPDN.

It belongs to the bacterial ribosomal protein bS18 family. Part of the 30S ribosomal subunit. Forms a tight heterodimer with protein bS6.

In terms of biological role, binds as a heterodimer with protein bS6 to the central domain of the 16S rRNA, where it helps stabilize the platform of the 30S subunit. In Desulfosudis oleivorans (strain DSM 6200 / JCM 39069 / Hxd3) (Desulfococcus oleovorans), this protein is Small ribosomal subunit protein bS18.